Reading from the N-terminus, the 146-residue chain is UPF0260 protein SO_2573 (146 aa).

Belongs to the UPF0260 family.

This Shewanella oneidensis (strain ATCC 700550 / JCM 31522 / CIP 106686 / LMG 19005 / NCIMB 14063 / MR-1) protein is UPF0260 protein SO_2573.